We begin with the raw amino-acid sequence, 256 residues long: UPF0246 protein TERTU_4575 (256 aa).

This sequence belongs to the UPF0246 family.

This Teredinibacter turnerae (strain ATCC 39867 / T7901) protein is UPF0246 protein TERTU_4575.